Reading from the N-terminus, the 490-residue chain is ATP synthase subunit beta, chloroplastic (490 aa).

The residue at position 6 (threonine 6) is a Phosphothreonine. Residue serine 13 is modified to Phosphoserine. 172-179 (GGAGVGKT) is an ATP binding site.

This sequence belongs to the ATPase alpha/beta chains family. As to quaternary structure, F-type ATPases have 2 components, CF(1) - the catalytic core - and CF(0) - the membrane proton channel. CF(1) has five subunits: alpha(3), beta(3), gamma(1), delta(1), epsilon(1). CF(0) has four main subunits: a(1), b(1), b'(1) and c(9-12).

The protein localises to the plastid. Its subcellular location is the chloroplast thylakoid membrane. It catalyses the reaction ATP + H2O + 4 H(+)(in) = ADP + phosphate + 5 H(+)(out). In terms of biological role, produces ATP from ADP in the presence of a proton gradient across the membrane. The catalytic sites are hosted primarily by the beta subunits. The sequence is that of ATP synthase subunit beta, chloroplastic from Aethionema grandiflorum (Persian stone-cress).